A 129-amino-acid chain; its full sequence is Virion-associated protein (129 aa).

2 coiled-coil regions span residues 1 to 31 (MANLNQIQKEVSEILSDQKSMKADIKAILEL) and 38 to 59 (IKESLETVAAKIVNDLTKLIND). Residues 122–129 (PAGWPNQY) form a capsid binding region.

Belongs to the caulimovirus ORF III family. In terms of assembly, homotetramer, through coiled-coil domain. Homotrimer when interacts with icosehadral capsid. Interacts with capsid protein, and with Movement protein.

It is found in the virion. It localises to the host cell junction. Its subcellular location is the host plasmodesma. Plays a role in virus cell-to-cell and plant-to-plant transmission. Interacts with virion icosahedral capsid and movement protein, thereby facilitating virion cell-to-cell transmission through plasmodesmata opened by viral movement protein. Also interacts with aphid transmission factor, attaching the virion to aphid stylet when the animal feeds on an virus infected plant. Aphid saliva may later detach the virion, inducing release of infectious particles when the animal feeds on a new plant. This chain is Virion-associated protein, found in Cauliflower mosaic virus (strain D/H) (CaMV).